Consider the following 610-residue polypeptide: MCGIVGAVAQRDVAEILLEGLRRLEYRGYDSAGLAVVDSEGHVARLRRLGKVQVLSQAAEEHELHGGTGIAHTRWATHGEPSEENAHPHISEHITIVHNGIIENHEPLRELMIGRGYRFVSETDTEVVAHLVHFEQKQNGGTLVEVVKRVIPQLRGAYGMVVLDNRDSSVLVAARSGSPLVIGRGVGENFIASDQLALLPVTRRFMFLEEGDVAEITRRDVRVFDKSGQLATREEIESKVSYDAGDKGAYRHYMQKEIYEQPMAIKNTLEGRFSHGEINLSELGPKADELLAKVEHVQIIACGTSYNSGMVSRYWFEALAGIPCDVEIASEFRYRKPAVRKNSLMITLSQSGETADTLAALRLSKELGYLGSLAICNVAGSSLVRESDMALMTKAGVEIGVASTKAFTTQLTVLLMLVARVGRLRGMDAQIEHDIVHGLQALPARIEQMLSQDKLIESLAEGFSDKHHALFLGRGDQYPIAMEGALKLKEISYIHAEAYAAGELKHGPLALIDADMPVVVVAPNNELLEKLKSNIEEVRARGGELYVFADEDAGFTSSENMKIIPLPHIEEVIAPIFYTVPLQLLSYHVALIKGTDVDQPRNLAKSVTVE.

The active-site Nucleophile; for GATase activity is the C2. In terms of domain architecture, Glutamine amidotransferase type-2 spans 2–219 (CGIVGAVAQR…EGDVAEITRR (218 aa)). SIS domains lie at 287–427 (ADEL…LRGM) and 459–600 (LAEG…VDQP). K605 serves as the catalytic For Fru-6P isomerization activity.

Homodimer.

The protein resides in the cytoplasm. It catalyses the reaction D-fructose 6-phosphate + L-glutamine = D-glucosamine 6-phosphate + L-glutamate. In terms of biological role, catalyzes the first step in hexosamine metabolism, converting fructose-6P into glucosamine-6P using glutamine as a nitrogen source. This is Glutamine--fructose-6-phosphate aminotransferase [isomerizing] from Pectobacterium atrosepticum (strain SCRI 1043 / ATCC BAA-672) (Erwinia carotovora subsp. atroseptica).